A 462-amino-acid polypeptide reads, in one-letter code: Succinate semialdehyde dehydrogenase [NAD(P)+] Sad (462 aa).

Residues 136–137 (WN), 160–163 (KHAP), and 212–213 (GS) contribute to the NADP(+) site. The active-site Proton acceptor is the glutamate 234. Leucine 235 contacts NADP(+). Cysteine 268 acts as the Nucleophile in catalysis. Glutamate 365 contacts NADP(+).

This sequence belongs to the aldehyde dehydrogenase family. Homodimer.

The enzyme catalyses succinate semialdehyde + NAD(+) + H2O = succinate + NADH + 2 H(+). It carries out the reaction succinate semialdehyde + NADP(+) + H2O = succinate + NADPH + 2 H(+). It functions in the pathway amino-acid degradation; 4-aminobutanoate degradation. Catalyzes the NAD(+)-dependent oxidation of succinate semialdehyde to succinate. It acts preferentially with NAD as cosubstrate but can also use NADP. Prevents the toxic accumulation of succinate semialdehyde (SSA) and plays an important role when arginine and putrescine are used as the sole nitrogen or carbon sources. In Escherichia coli (strain K12), this protein is Succinate semialdehyde dehydrogenase [NAD(P)+] Sad (sad).